A 430-amino-acid polypeptide reads, in one-letter code: Mothers against decapentaplegic homolog 9 (430 aa).

One can recognise an MH1 domain in the interval 16 to 140; sequence PAVKRLLGWK…YRRVETPVLP (125 aa). Zn(2+) is bound by residues C68, C113, C125, and H130. The segment at 186-222 is disordered; that stretch reads CPAPPSSPGHVFPQSPCPTSYPHSPGSPSESDSPYQH. Positions 202–221 are enriched in polar residues; that stretch reads CPTSYPHSPGSPSESDSPYQ. The 195-residue stretch at 236-430 folds into the MH2 domain; it reads WCSVAYYELN…SPHNPISSVS (195 aa).

It belongs to the dwarfin/SMAD family. Interaction with the co-SMAD SMAD4. Interacts with PEBP2-alpha subunit. Interacts with RANBP3L. In terms of processing, phosphorylated on serine by BMP (bone morphogenetic proteins) type 1 receptor kinase and activin type I receptor-like kinases (ALK-2, ALK-3 and ALK-6).

It localises to the cytoplasm. The protein resides in the nucleus. In terms of biological role, transcriptional modulator activated by BMP (bone morphogenetic proteins) type 1 receptor kinase. SMAD9 is a receptor-regulated SMAD (R-SMAD). Has been shown to be activated by activin type I receptor-like kinases (ALK-2, ALK-3, ALK-6) which stimulate heteromerization between SMAD9 and SMAD4. May play a role in osteoblast differentiation and maturation. The polypeptide is Mothers against decapentaplegic homolog 9 (Smad9) (Mus musculus (Mouse)).